The chain runs to 169 residues: Crossover junction endodeoxyribonuclease RuvC (169 aa).

Residues Asp11, Glu71, and Asp143 contribute to the active site. 3 residues coordinate Mg(2+): Asp11, Glu71, and Asp143.

This sequence belongs to the RuvC family. In terms of assembly, homodimer which binds Holliday junction (HJ) DNA. The HJ becomes 2-fold symmetrical on binding to RuvC with unstacked arms; it has a different conformation from HJ DNA in complex with RuvA. In the full resolvosome a probable DNA-RuvA(4)-RuvB(12)-RuvC(2) complex forms which resolves the HJ. The cofactor is Mg(2+).

The protein localises to the cytoplasm. It carries out the reaction Endonucleolytic cleavage at a junction such as a reciprocal single-stranded crossover between two homologous DNA duplexes (Holliday junction).. Its function is as follows. The RuvA-RuvB-RuvC complex processes Holliday junction (HJ) DNA during genetic recombination and DNA repair. Endonuclease that resolves HJ intermediates. Cleaves cruciform DNA by making single-stranded nicks across the HJ at symmetrical positions within the homologous arms, yielding a 5'-phosphate and a 3'-hydroxyl group; requires a central core of homology in the junction. The consensus cleavage sequence is 5'-(A/T)TT(C/G)-3'. Cleavage occurs on the 3'-side of the TT dinucleotide at the point of strand exchange. HJ branch migration catalyzed by RuvA-RuvB allows RuvC to scan DNA until it finds its consensus sequence, where it cleaves and resolves the cruciform DNA. The polypeptide is Crossover junction endodeoxyribonuclease RuvC (Rhizobium leguminosarum bv. trifolii (strain WSM2304)).